A 399-amino-acid chain; its full sequence is Phosphate acyltransferase (399 aa).

The protein belongs to the PlsX family. Homodimer. Probably interacts with PlsY.

It localises to the cytoplasm. The enzyme catalyses a fatty acyl-[ACP] + phosphate = an acyl phosphate + holo-[ACP]. It functions in the pathway lipid metabolism; phospholipid metabolism. In terms of biological role, catalyzes the reversible formation of acyl-phosphate (acyl-PO(4)) from acyl-[acyl-carrier-protein] (acyl-ACP). This enzyme utilizes acyl-ACP as fatty acyl donor, but not acyl-CoA. The polypeptide is Phosphate acyltransferase (Rhodobacter capsulatus (Rhodopseudomonas capsulata)).